The chain runs to 498 residues: Probable cytosol aminopeptidase (498 aa).

Mn(2+) contacts are provided by K267 and D272. K279 is an active-site residue. 3 residues coordinate Mn(2+): D290, D349, and E351. Residue R353 is part of the active site.

It belongs to the peptidase M17 family. The cofactor is Mn(2+).

It is found in the cytoplasm. It catalyses the reaction Release of an N-terminal amino acid, Xaa-|-Yaa-, in which Xaa is preferably Leu, but may be other amino acids including Pro although not Arg or Lys, and Yaa may be Pro. Amino acid amides and methyl esters are also readily hydrolyzed, but rates on arylamides are exceedingly low.. The enzyme catalyses Release of an N-terminal amino acid, preferentially leucine, but not glutamic or aspartic acids.. In terms of biological role, presumably involved in the processing and regular turnover of intracellular proteins. Catalyzes the removal of unsubstituted N-terminal amino acids from various peptides. This Dechloromonas aromatica (strain RCB) protein is Probable cytosol aminopeptidase.